A 654-amino-acid chain; its full sequence is Endoplasmic reticulum chaperone BiP (654 aa).

A signal peptide spans 1–18 (MKLSLVAAVLLLLCAARA). A required for interaction with ELAPOR1 region spans residues 1 to 80 (MKLSLVAAVL…EGERLIGDAA (80 aa)). 36 to 39 (GTTY) is an ATP binding site. Residue Ser86 is modified to Phosphoserine. Lys96 is an ATP binding site. The residue at position 125 (Lys125) is an N6-acetyllysine. The segment at 125 to 280 (KPYIQVDIGG…KKKTGKDVRK (156 aa)) is nucleotide-binding (NBD). Tyr160 is subject to 3'-nitrotyrosine. Residue Lys213 is modified to N6-acetyllysine. 227–229 (GGT) is a binding site for ATP. Lys271 is subject to N6-acetyllysine. Position 293–300 (293–300 (EKAKRALS)) interacts with ATP. Lys326 is modified (N6-acetyllysine). A Glycyl lysine isopeptide (Lys-Gly) (interchain with G-Cter in SUMO2) cross-link involves residue Lys352. Position 353 is an N6-acetyllysine; alternate (Lys353). A Glycyl lysine isopeptide (Lys-Gly) (interchain with G-Cter in SUMO1); alternate cross-link involves residue Lys353. 364-367 (GSTR) contributes to the ATP binding site. The tract at residues 409–419 (QDTGDLVLLDV) is interdomain linker. The interval 420 to 500 (CPLTLGIETV…PRGVPQIEVT (81 aa)) is substrate-binding (SBD). Lys447 is subject to N6-succinyllysine. Arg492 bears the Omega-N-methylarginine mark. O-AMP-threonine; alternate is present on Thr518. Residue Thr518 is modified to Phosphothreonine; alternate. The residue at position 585 (Lys585) is an N6,N6,N6-trimethyllysine; by METTL21A; in vitro. Position 585 is an N6,N6-dimethyllysine; alternate (Lys585). An N6-methyllysine; alternate modification is found at Lys585. Position 591 is an N6-methyllysine (Lys591). The segment at 632 to 654 (SKLYGSAGPPPTGEEDTSERDEL) is disordered. 2 positions are modified to phosphothreonine: Thr643 and Thr648. Over residues 644–654 (GEEDTSERDEL) the composition is skewed to acidic residues. Position 649 is a phosphoserine (Ser649). The short motif at 651–654 (RDEL) is the Prevents secretion from ER element.

This sequence belongs to the heat shock protein 70 family. As to quaternary structure, monomer and homooligomer; homooligomerization via the interdomain linker inactivates the chaperone activity and acts as a storage of HSPA5/BiP molecules. Interacts with DNAJC1 (via J domain). Component of an EIF2 complex at least composed of CELF1/CUGBP1, CALR, CALR3, EIF2S1, EIF2S2, HSP90B1 and HSPA5. Part of a large chaperone multiprotein complex comprising DNAJB11, HSP90B1, HSPA5, HYOU, PDIA2, PDIA4, PDIA6, PPIB, SDF2L1, UGGT1 and very small amounts of ERP29, but not, or at very low levels, CALR nor CANX. Interacts with TMEM132A and TRIM21. May form a complex with ERLEC1, OS9, SEL1L and SYVN1. Interacts with DNAJC10. Interacts with DNAJB9/ERdj4; leading to recruit HSPA5/BiP to ERN1/IRE1. Interacts with ERN1/IRE1 (via luminal domain); the interaction takes place following interaction with DNAJB9/ERdj4 and leads to inactivate ERN1/IRE1, the interaction also competitively inhibits ERN1 interaction with MANF. Interacts directly with MANF (via SAP domain); the interaction inhibits ATP binding to HSPA5/BiP and subsequent nucleotide exchange. Interacts with EIF2AK3/PERK (via luminal domain); interaction leads to inactivate EIF2AK3/PERK. Interacts with MX1. Interacts with METTL23. Interacts with CEMIP; the interaction induces calcium leakage from the endoplasmic reticulum and cell migration. Interacts with PCSK4 form; the interaction takes place in the endoplasmic reticulum. Interacts with CIPC. Interacts with CCDC88B (via C-terminus); the interaction opposes ERN1-mediated JNK activation, protecting against apoptosis. Interacts with INPP5K; necessary for INPP5K localization at the endoplasmic reticulum. Interacts with MANF; the interaction is direct. Interacts with LOXL2; leading to activate the ERN1/IRE1-XBP1 pathway of the unfolded protein response. Interacts with CLU under stressed condition; interaction increases CLU protein stability; facilitates its retrotranslocation and redistribution to the mitochondria; cooperatively suppress stress-induced apoptosis by stabilizing mitochondrial membrane integrity. Interacts with CCDC47. Interacts with CLN3. Interacts with ELAPOR1; may regulate the function of HSPA5 in apoptosis and cell proliferation. Interacts with CASP7. Interacts with ILDR2; the interaction stabilizes ILDR2 expression. Interacts with ADAM7. In unstressed cells, AMPylation at Thr-518 by FICD inactivates the chaperome activity: AMPylated form is locked in a relatively inert state and only weakly stimulated by J domain-containing proteins. In response to endoplasmic reticulum stress, de-AMPylation by the same protein, FICD, restores the chaperone activity.

The protein resides in the endoplasmic reticulum lumen. Its subcellular location is the melanosome. The protein localises to the cytoplasm. It is found in the cell surface. It catalyses the reaction ATP + H2O = ADP + phosphate + H(+). Its activity is regulated as follows. The chaperone activity is regulated by ATP-induced allosteric coupling of the nucleotide-binding (NBD) and substrate-binding (SBD) domains. In the ADP-bound and nucleotide-free (apo) states, the two domains have little interaction. In contrast, in the ATP-bound state the two domains are tightly coupled, which results in drastically accelerated kinetics in both binding and release of polypeptide substrates. J domain-containing co-chaperones (DNAJB9/ERdj4 or DNAJC10/ERdj5) stimulate the ATPase activity and are required for efficient substrate recognition by HSPA5/BiP. Homooligomerization inactivates participating HSPA5/BiP protomers and probably act as reservoirs to store HSPA5/BiP molecules when they are not needed by the cell. Endoplasmic reticulum chaperone that plays a key role in protein folding and quality control in the endoplasmic reticulum lumen. Involved in the correct folding of proteins and degradation of misfolded proteins via its interaction with DNAJC10/ERdj5, probably to facilitate the release of DNAJC10/ERdj5 from its substrate. Acts as a key repressor of the EIF2AK3/PERK and ERN1/IRE1-mediated unfolded protein response (UPR). In the unstressed endoplasmic reticulum, recruited by DNAJB9/ERdj4 to the luminal region of ERN1/IRE1, leading to disrupt the dimerization of ERN1/IRE1, thereby inactivating ERN1/IRE1. Also binds and inactivates EIF2AK3/PERK in unstressed cells. Accumulation of misfolded protein in the endoplasmic reticulum causes release of HSPA5/BiP from ERN1/IRE1 and EIF2AK3/PERK, allowing their homodimerization and subsequent activation. Plays an auxiliary role in post-translational transport of small presecretory proteins across endoplasmic reticulum (ER). May function as an allosteric modulator for SEC61 channel-forming translocon complex, likely cooperating with SEC62 to enable the productive insertion of these precursors into SEC61 channel. Appears to specifically regulate translocation of precursors having inhibitory residues in their mature region that weaken channel gating. May also play a role in apoptosis and cell proliferation. The sequence is that of Endoplasmic reticulum chaperone BiP from Ictidomys tridecemlineatus (Thirteen-lined ground squirrel).